Here is a 323-residue protein sequence, read N- to C-terminus: UDP-galactose/UDP-glucose transporter 7 (323 aa).

Residues 1–10 (MEVQAEMEPT) are Cytoplasmic-facing. A helical transmembrane segment spans residues 11–31 (SSISLVAAVSYGIASMAMVFI). Over 32 to 35 (NKAV) the chain is Lumenal. The chain crosses the membrane as a helical span at residues 36-58 (IMQYPHSMTVLTLQQLATSLLIH). At 59–78 (FGRRMGYTRAKGIDMATAKK) the chain is on the cytoplasmic side. Residues 79 to 97 (LLPVSIFYNANVAFALASL) form a helical membrane-spanning segment. At 98 to 101 (KGVN) the chain is on the lumenal side. The helical transmembrane segment at 102 to 124 (IPMYIAIKRLTPLAVLISGVLFG) threads the bilayer. The Cytoplasmic portion of the chain corresponds to 125–132 (KGKPTTQV). Residues 133-153 (ALSVLLTAAGCVIAALGDFSF) traverse the membrane as a helical segment. A topological domain (lumenal) is located at residue Asp-154. Residues 155–175 (LFGYGLALTSVFFQTMYLVLV) traverse the membrane as a helical segment. Residues 176–186 (EKSGAEDGLSS) are Cytoplasmic-facing. Residues 187–207 (IEIMFYNSFLSLPFLSILIIV) traverse the membrane as a helical segment. The Lumenal segment spans residues 208–226 (TGEFPNSLSLLLAKCSYLP). Residues 227–247 (FLVILILSLVMGIVLNFTMFL) traverse the membrane as a helical segment. Residues 248 to 252 (CTIVN) are Cytoplasmic-facing. Residues 253 to 275 (SALTTTIVGVLKGVGSTTLGFVL) form a helical membrane-spanning segment. The Lumenal portion of the chain corresponds to 276 to 278 (LGG). Residues 279–301 (VEVHALNVSGLVVNTAGGVWYSY) form a helical membrane-spanning segment. Over 302–323 (AKYRQKKAKPAKLMSDLEAHKK) the chain is Cytoplasmic.

It belongs to the TPT transporter family. UGnT (TC 2.A.7.15) subfamily. As to expression, widely expressed with highest expression in roots.

It is found in the golgi apparatus membrane. Functionally, nucleotide-sugar transporter that transports UDP-glucose and UDP-galactose. Plays a role in lateral root and root hair development. This chain is UDP-galactose/UDP-glucose transporter 7, found in Arabidopsis thaliana (Mouse-ear cress).